Reading from the N-terminus, the 747-residue chain is Anoctamin-9 (747 aa).

Residues 1–193 (MQDDESSQIF…LYFTWLGWYT (193 aa)) lie on the Cytoplasmic side of the membrane. The helical transmembrane segment at 194-214 (YMLVPAAVVGLIVFLSGFALF) threads the bilayer. At 215–259 (DSSQISKEICSANDIFMCPLGDHSHRYLRLSEMCTFAKLTHLFDN) the chain is on the extracellular side. The residue at position 245 (S245) is a Phosphoserine; by PKA. The helical transmembrane segment at 260–280 (EGTVLFAIFMALWATVFLEIW) threads the bilayer. Over 281 to 326 (KRKRAHEVQSWKLYEWDEEEEEMALELINSPHYKLKDHRHSYLSST) the chain is Cytoplasmic. The helical transmembrane segment at 327–347 (IILILSLFMICLMIGMAHVLV) threads the bilayer. Topologically, residues 348–364 (VYRVLAGALFSSLVKQQ) are extracellular. The chain crosses the membrane as a helical span at residues 365–385 (VTTAVVVTGAVVHYIIIVIMT). Topologically, residues 386–414 (KVNKYVALKLCKFEESGTFSEQERKFTVK) are cytoplasmic. The chain crosses the membrane as a helical span at residues 415–435 (FFILQFFAHFSSLIYIAFILG). Topologically, residues 436-543 (RINGHPGKST…EMMIQYGFTT (108 aa)) are extracellular. A helical membrane pass occupies residues 544–564 (IFVAAFPLAPLLALFSNLVEI). The Cytoplasmic portion of the chain corresponds to 565–595 (RLDAIKMVRLQRRLVPRKAKDIGTWLQVLET). A helical membrane pass occupies residues 596–616 (IGVLAVIANGMVIAFTSEFIP). Over 617 to 695 (RVVYKYHYGP…FWFILAIRLT (79 aa)) the chain is Extracellular. N630, N643, N665, and N681 each carry an N-linked (GlcNAc...) asparagine glycan. The helical transmembrane segment at 696-716 (FVILFEHFALCIKLIAAWFVP) threads the bilayer. Residues 717-747 (DVPQKVKNEVLQEKYDRIRHRMRFSSRSTDV) lie on the Cytoplasmic side of the membrane.

This sequence belongs to the anoctamin family. In terms of processing, phosphorylation on Ser-245 by cAMP-dependent protein kinase A (PKA)is essential for activation of its cation channel activity. In terms of tissue distribution, highly expressed in the olfactory epithelium, particularly in mature olfactory sensory neurons (at protein level). Expressed in the kidney (at protein level). Predominant expression seen in epithelial tissues. Highly expressed in the small intestine, colon and stomach.

It localises to the cell membrane. Its subcellular location is the endoplasmic reticulum. The catalysed reaction is a 1,2-diacyl-sn-glycero-3-phospho-L-serine(in) = a 1,2-diacyl-sn-glycero-3-phospho-L-serine(out). It carries out the reaction a beta-D-galactosyl-(1&lt;-&gt;1')-N-acylsphing-4-enine(out) = a beta-D-galactosyl-(1&lt;-&gt;1')-N-acylsphing-4-enine(in). The enzyme catalyses a 1,2-diacyl-sn-glycero-3-phosphocholine(in) = a 1,2-diacyl-sn-glycero-3-phosphocholine(out). It catalyses the reaction Ca(2+)(in) = Ca(2+)(out). The catalysed reaction is Na(+)(in) = Na(+)(out). It carries out the reaction K(+)(in) = K(+)(out). With respect to regulation, cation channel activity is activated via phosphorylation on Ser-245 by cAMP-dependent protein kinase A (PKA). Inhibited by NaCl. Its function is as follows. PKA-activated nonselective cation channel. Discriminates poorly among cations but is more permeable to Ca(2+) ions than to monovalent cations. Acts as a calcium-activated calcium permeable channel which may operate as a endoplasmic reticulum (ER) Ca(2+)-leak channel, reducing the loading of the ER Ca(2+) store. Regulates intracellular Ca2+ signals, ion channel activity, and cytokine release in the renal tissue. Plays an important role in olfaction, amplifying cAMP-evoked cyclic nucleotide-gated (CNG) channel currents in the olfactory sensory neurons. Has calcium-dependent phospholipid scramblase activity; scrambles phosphatidylserine, phosphatidylcholine and galactosylceramide. Does not exhibit calcium-activated chloride channel (CaCC) activity. Can inhibit the activity of ANO1. The chain is Anoctamin-9 from Mus musculus (Mouse).